The chain runs to 714 residues: Probable metal-nicotianamine transporter YSL5 (714 aa).

The disordered stretch occupies residues 17–44; sequence HELQETGFSPETEKVKNKNFEEDEEEED. Residues 27 to 36 show a composition bias toward basic and acidic residues; the sequence is ETEKVKNKNF. A run of 13 helical transmembrane segments spans residues 67–87, 90–110, 135–155, 175–195, 236–256, 295–315, 340–360, 413–433, 445–465, 477–497, 531–551, 593–613, and 631–651; these read AFVV…KLNL, GIIP…VKTW, CVVA…LFGM, LGWI…SVVP, VLGK…FFTG, IINI…WPLI, VFIA…KVLS, IPTW…TAIL, ILVI…GAGL, LAIF…LAGL, FVSQ…VFWL, LVLC…KDSL, and FFLG…LFIW.

Belongs to the YSL (TC 2.A.67.2) family.

The protein localises to the membrane. May be involved in the transport of nicotianamine-chelated metals. This is Probable metal-nicotianamine transporter YSL5 (YSL5) from Arabidopsis thaliana (Mouse-ear cress).